Reading from the N-terminus, the 483-residue chain is ATP synthase subunit beta (483 aa).

G167–T174 contacts ATP.

It belongs to the ATPase alpha/beta chains family. F-type ATPases have 2 components, CF(1) - the catalytic core - and CF(0) - the membrane proton channel. CF(1) has five subunits: alpha(3), beta(3), gamma(1), delta(1), epsilon(1). CF(0) has three main subunits: a(1), b(2) and c(9-12). The alpha and beta chains form an alternating ring which encloses part of the gamma chain. CF(1) is attached to CF(0) by a central stalk formed by the gamma and epsilon chains, while a peripheral stalk is formed by the delta and b chains.

It is found in the cell membrane. It carries out the reaction ATP + H2O + 4 H(+)(in) = ADP + phosphate + 5 H(+)(out). In terms of biological role, produces ATP from ADP in the presence of a proton gradient across the membrane. The catalytic sites are hosted primarily by the beta subunits. This Paenarthrobacter aurescens (strain TC1) protein is ATP synthase subunit beta.